We begin with the raw amino-acid sequence, 771 residues long: Carnitine O-palmitoyltransferase 1, muscle isoform (771 aa).

Residues 1–47 (MAEAHQAVAFQFTVTPEGVDFQLSREVLKHIYLSVIRSWKKRLIRIK) lie on the Cytoplasmic side of the membrane. The chain crosses the membrane as a helical span at residues 48-73 (NGILRGVYPGSPTSWLVVVMATAGSS). Residues 74–101 (YYNVDISMGLVYYIQRWLPEGRPYRTPY) lie on the Mitochondrial intermembrane side of the membrane. A helical transmembrane segment spans residues 102–121 (TRTLFSMAIFSTGVWMMGIF). The Cytoplasmic portion of the chain corresponds to 122–771 (FFRQTLKLLL…NLFQVPKADG (650 aa)). Residue His-472 is the Proton acceptor of the active site. 554–566 (GKGLIKKCRTSPD) lines the CoA pocket. 2 residues coordinate (R)-carnitine: Tyr-588 and Thr-601.

Belongs to the carnitine/choline acetyltransferase family.

Its subcellular location is the mitochondrion outer membrane. It catalyses the reaction (R)-carnitine + hexadecanoyl-CoA = O-hexadecanoyl-(R)-carnitine + CoA. Its pathway is lipid metabolism; fatty acid beta-oxidation. In terms of biological role, catalyzes the transfer of the acyl group of long-chain fatty acid-CoA conjugates onto carnitine, an essential step for the mitochondrial uptake of long-chain fatty acids and their subsequent beta-oxidation in the mitochondrion. The chain is Carnitine O-palmitoyltransferase 1, muscle isoform (CPT1B) from Bos taurus (Bovine).